Reading from the N-terminus, the 786-residue chain is DNA repair and recombination protein RAD54-like (786 aa).

A required for chromatin remodeling, strand pairing activities and coupling of ATPase activity region spans residues 2–9; it reads RRSLAPSQ. Threonine 22 is subject to Phosphothreonine. In terms of domain architecture, Helicase ATP-binding spans 165–340; that stretch reads EGKRGNFNGC…FSLVNFVNPE (176 aa). Residue 178–185 coordinates ATP; it reads DEMGLGKT. The DEGH box signature appears at 291–294; the sequence is DEGH. Residues 497 to 654 form the Helicase C-terminal domain; sequence LLDFMLAAIR…NNDSAEKHFT (158 aa). Residues 740–786 form a disordered region; the sequence is KQPTCITEDNHSEQPQLNSKRNANSVLENDDDEDFDPNSSDEKFLGF. Positions 752–766 are enriched in polar residues; it reads EQPQLNSKRNANSVL.

This sequence belongs to the SNF2/RAD54 helicase family. As to quaternary structure, interacts (via N-terminus) with spn-A/Rad51.

The protein resides in the nucleus. Involved in mitotic DNA repair and meiotic recombination. Functions in the recombinational DNA repair pathway. Essential for interhomolog gene conversion (GC), but may have a less important role in intersister GC than spn-A/Rad51. In the presence of DNA, spn-A/Rad51 enhances the ATPase activity of okr/Rad54. This is DNA repair and recombination protein RAD54-like from Drosophila virilis (Fruit fly).